Reading from the N-terminus, the 323-residue chain is Germacrene A synthase (323 aa).

5 residues coordinate Mg(2+): Asp82, Asp86, Asn222, Ser226, and Glu230. The DDXXD motif signature appears at 82-86; the sequence is DDQCD.

The protein belongs to the terpene synthase family. It depends on Mg(2+) as a cofactor.

The catalysed reaction is (2E,6E)-farnesyl diphosphate = 5-epi-alpha-selinene + diphosphate. Functionally, catalyzes the cyclization of farnesyl diphosphate (FPP) to the sesquiterpene germacrene A. This is Germacrene A synthase from Nostoc punctiforme (strain ATCC 29133 / PCC 73102).